Consider the following 501-residue polypeptide: Solute carrier family 2, facilitated glucose transporter member 5 (501 aa).

The residue at position 1 (M1) is an N-acetylmethionine. At 1-18 (MEQQDQSMKEGRLTLVLA) the chain is on the cytoplasmic side. The chain crosses the membrane as a helical span at residues 19–39 (LATLIAAFGSSFQYGYNVAAV). Y32 contributes to the D-fructose binding site. Residues 40 to 68 (NSPALLMQQFYNETYYGRTGEFMEDFPLT) are Extracellular-facing. A glycan (N-linked (GlcNAc...) asparagine) is linked at N51. The helical transmembrane segment at 69-91 (LLWSVTVSMFPFGGFIGSLLVGP) threads the bilayer. At 92–98 (LVNKFGR) the chain is on the cytoplasmic side. Residues 99–119 (KGALLFNNIFSIVPAILMGCS) traverse the membrane as a helical segment. Residues 120–126 (RVAKSFE) are Extracellular-facing. Residues 127 to 149 (LIIISRLLVGICAGVSSNVVPMY) form a helical membrane-spanning segment. Residues 150 to 161 (LGELAPKNLRGA) lie on the Cytoplasmic side of the membrane. Residues 162–182 (LGVVPQLFITVGILVAQIFGL) traverse the membrane as a helical segment. Q167 contacts D-fructose. At 183–192 (RNLLANVDGW) the chain is on the extracellular side. Residues 193-213 (PILLGLTGVPAALQLVLLPFF) traverse the membrane as a helical segment. At 214–277 (PESPRYLLIQ…LFRMRSLRWQ (64 aa)) the chain is on the cytoplasmic side. A helical transmembrane segment spans residues 278–298 (LLSIIVLMGGQQLSGVNAIYY). D-fructose is bound by residues Q288 and 296-298 (IYY). Topologically, residues 299 to 313 (YADQIYLSAGVPKEH) are extracellular. The chain crosses the membrane as a helical span at residues 314–334 (VQFVTAGTGAVNVVMTFCAVF). Topologically, residues 335–342 (VVELLGRR) are cytoplasmic. The chain crosses the membrane as a helical span at residues 343–363 (LLLLLGFSICLVACCVLTAAL). The Extracellular segment spans residues 364–371 (ALQDTVSW). Residues 372-394 (MPYISIVCVISYVIGHALGPSPI) form a helical membrane-spanning segment. H387 contributes to the D-fructose binding site. The Cytoplasmic segment spans residues 395-412 (PALLITEIFLQSSRPSAF). A helical membrane pass occupies residues 413–433 (MVGGSVHWLSNFTVGLIFPFI). 419-420 (HW) lines the D-fructose pocket. Residues 434–439 (QEGLGP) are Extracellular-facing. A helical membrane pass occupies residues 440-460 (YSFIVFAVICLLTTIYIFLIV). Residues 461–501 (PETKAKTFIEINQIFTKMNKVSEVYPEKEELKELPPVTLEQ) lie on the Cytoplasmic side of the membrane.

Belongs to the major facilitator superfamily. Sugar transporter (TC 2.A.1.1) family. Glucose transporter subfamily.

The protein localises to the apical cell membrane. The protein resides in the cell membrane. It is found in the sarcolemma. It catalyses the reaction D-fructose(out) = D-fructose(in). Functionally, functions as a fructose transporter that has only low activity with other monosaccharides. Can mediate the uptake of deoxyglucose, but with low efficiency. Essential for fructose uptake in the small intestine. Plays a role in the regulation of salt uptake and blood pressure in response to dietary fructose. Required for the development of high blood pressure in response to high dietary fructose intake. This Pongo abelii (Sumatran orangutan) protein is Solute carrier family 2, facilitated glucose transporter member 5.